The sequence spans 456 residues: Bifunctional protein GlmU (456 aa).

Residues M1–R230 form a pyrophosphorylase region. UDP-N-acetyl-alpha-D-glucosamine contacts are provided by residues L9 to G12, K23, Q73, and G78 to T79. D103 contacts Mg(2+). Positions 140, 155, 170, and 228 each coordinate UDP-N-acetyl-alpha-D-glucosamine. N228 contacts Mg(2+). Residues V231–N251 form a linker region. Residues G252–K456 are N-acetyltransferase. UDP-N-acetyl-alpha-D-glucosamine is bound by residues R333 and K351. H363 serves as the catalytic Proton acceptor. The UDP-N-acetyl-alpha-D-glucosamine site is built by Y366 and N377. Residues N386–Y387, A423, and R440 each bind acetyl-CoA.

It in the N-terminal section; belongs to the N-acetylglucosamine-1-phosphate uridyltransferase family. This sequence in the C-terminal section; belongs to the transferase hexapeptide repeat family. Homotrimer. The cofactor is Mg(2+).

The protein resides in the cytoplasm. The catalysed reaction is alpha-D-glucosamine 1-phosphate + acetyl-CoA = N-acetyl-alpha-D-glucosamine 1-phosphate + CoA + H(+). The enzyme catalyses N-acetyl-alpha-D-glucosamine 1-phosphate + UTP + H(+) = UDP-N-acetyl-alpha-D-glucosamine + diphosphate. The protein operates within nucleotide-sugar biosynthesis; UDP-N-acetyl-alpha-D-glucosamine biosynthesis; N-acetyl-alpha-D-glucosamine 1-phosphate from alpha-D-glucosamine 6-phosphate (route II): step 2/2. Its pathway is nucleotide-sugar biosynthesis; UDP-N-acetyl-alpha-D-glucosamine biosynthesis; UDP-N-acetyl-alpha-D-glucosamine from N-acetyl-alpha-D-glucosamine 1-phosphate: step 1/1. It participates in bacterial outer membrane biogenesis; LPS lipid A biosynthesis. Catalyzes the last two sequential reactions in the de novo biosynthetic pathway for UDP-N-acetylglucosamine (UDP-GlcNAc). The C-terminal domain catalyzes the transfer of acetyl group from acetyl coenzyme A to glucosamine-1-phosphate (GlcN-1-P) to produce N-acetylglucosamine-1-phosphate (GlcNAc-1-P), which is converted into UDP-GlcNAc by the transfer of uridine 5-monophosphate (from uridine 5-triphosphate), a reaction catalyzed by the N-terminal domain. The chain is Bifunctional protein GlmU from Bacillus subtilis (strain 168).